Consider the following 231-residue polypeptide: 5'-methylthioadenosine/S-adenosylhomocysteine nucleosidase (231 aa).

Glutamate 12 (proton acceptor) is an active-site residue. Substrate contacts are provided by residues glycine 78, isoleucine 153, and 174 to 175 (ME). Aspartate 198 (proton donor) is an active-site residue.

This sequence belongs to the PNP/UDP phosphorylase family. MtnN subfamily.

The enzyme catalyses S-adenosyl-L-homocysteine + H2O = S-(5-deoxy-D-ribos-5-yl)-L-homocysteine + adenine. It catalyses the reaction S-methyl-5'-thioadenosine + H2O = 5-(methylsulfanyl)-D-ribose + adenine. It carries out the reaction 5'-deoxyadenosine + H2O = 5-deoxy-D-ribose + adenine. The protein operates within amino-acid biosynthesis; L-methionine biosynthesis via salvage pathway; S-methyl-5-thio-alpha-D-ribose 1-phosphate from S-methyl-5'-thioadenosine (hydrolase route): step 1/2. Its function is as follows. Catalyzes the irreversible cleavage of the glycosidic bond in both 5'-methylthioadenosine (MTA) and S-adenosylhomocysteine (SAH/AdoHcy) to adenine and the corresponding thioribose, 5'-methylthioribose and S-ribosylhomocysteine, respectively. Also cleaves 5'-deoxyadenosine, a toxic by-product of radical S-adenosylmethionine (SAM) enzymes, into 5-deoxyribose and adenine. The sequence is that of 5'-methylthioadenosine/S-adenosylhomocysteine nucleosidase from Shewanella sp. (strain W3-18-1).